Here is a 214-residue protein sequence, read N- to C-terminus: Ribosomal RNA small subunit methyltransferase G (214 aa).

S-adenosyl-L-methionine-binding positions include Gly81, Met86, 132–133 (VE), and Arg147.

The protein belongs to the methyltransferase superfamily. RNA methyltransferase RsmG family.

It localises to the cytoplasm. The catalysed reaction is guanosine(527) in 16S rRNA + S-adenosyl-L-methionine = N(7)-methylguanosine(527) in 16S rRNA + S-adenosyl-L-homocysteine. In terms of biological role, specifically methylates the N7 position of guanine in position 527 of 16S rRNA. This Ectopseudomonas mendocina (strain ymp) (Pseudomonas mendocina) protein is Ribosomal RNA small subunit methyltransferase G.